A 330-amino-acid chain; its full sequence is 3'-5' exonuclease (330 aa).

Residues 1 to 92 (MDQYLIKMST…DGTPSPEKEI (92 aa)) are disordered. Composition is skewed to basic and acidic residues over residues 27–39 (NTTR…KEKI) and 48–66 (KDTP…ENPP). Phosphoserine is present on residues serine 79 and serine 87. The region spanning 117–289 (SADEVMQWVE…IGQVIYRDIE (173 aa)) is the 3'-5' exonuclease domain. Aspartate 139, glutamate 141, and aspartate 277 together coordinate Mg(2+).

The protein belongs to the WRNexo family.

The protein localises to the nucleus. Its function is as follows. Has exonuclease activity on both single-stranded and duplex templates bearing overhangs, but not blunt ended duplex DNA, and cleaves in a 3'-5' direction. Essential for the formation of DNA replication focal centers. Has an important role in maintaining genome stability. This chain is 3'-5' exonuclease, found in Drosophila virilis (Fruit fly).